Consider the following 509-residue polypeptide: Tyrosine-protein kinase Lck (509 aa).

A lipid anchor (N-myristoyl glycine) is attached at glycine 2. The tract at residues 2 to 72 (GCGCSSHPED…DNLVIALHSY (71 aa)) is interactions with CD4 and CD8. 2 S-palmitoyl cysteine lipidation sites follow: cysteine 3 and cysteine 5. The region spanning 61–121 (LQDNLVIALH…PFNFVAKANS (61 aa)) is the SH3 domain. Lysine 99 participates in a covalent cross-link: Glycyl lysine isopeptide (Lys-Gly) (interchain with G-Cter in ubiquitin). The residue at position 102 (serine 102) is a Phosphoserine. The SH2 domain maps to 127 to 224 (WFFKNLSRKD…GLCTRLSRPC (98 aa)). An interaction with PTPRH region spans residues 154 to 242 (RESESTAGSF…WWEDEWEVPR (89 aa)). Threonine 159 carries the post-translational modification Phosphothreonine. Serine 162 carries the phosphoserine modification. At tyrosine 192 the chain carries Phosphotyrosine. Phosphoserine is present on serine 194. Residues 245–498 (LKLVERLGAG…YLRSVLEDFF (254 aa)) enclose the Protein kinase domain. ATP is bound by residues 251-259 (LGAGQFGEV) and lysine 273. A Glycyl lysine isopeptide (Lys-Gly) (interchain with G-Cter in ubiquitin) cross-link involves residue lysine 276. Aspartate 364 serves as the catalytic Proton acceptor. Tyrosine 394 is subject to Phosphotyrosine; by autocatalysis. Tyrosine 505 carries the post-translational modification Phosphotyrosine; by CSK.

It belongs to the protein kinase superfamily. Tyr protein kinase family. SRC subfamily. As to quaternary structure, binds to the cytoplasmic domain of cell surface receptors, such as AXL, CD2, CD4, CD5, CD8, CD44, CD45 and CD122. Also binds to effector molecules, such as PI4K, VAV1, RASA1, FYB1 and to other protein kinases including CDK1, RAF1, ZAP70 and SYK. Binds to phosphatidylinositol 3'-kinase (PI3K) from T-lymphocytes through its SH3 domain and to the tyrosine phosphorylated form of KHDRBS1/p70 through its SH2 domain. This interaction inhibits its tyrosine-kinase activity. Interacts with SQSTM1. Interacts with phosphorylated LIME1. Interacts with CBLB and PTPRH. Interacts with RUNX3. Forms a signaling complex with EPHA1, PTK2B and PI3-KINASE; upon activation by EFNA1 which may regulate T-lymphocyte migration. Associates with ZAP70 and RHOH; these interactions allow LCK-mediated RHOH and CD3 subunit phosphorylation in the presence of functional ZAP70. Interacts with UNC119; this interaction plays a crucial role in activation of LCK. Interacts with CEACAM1 (via cytoplasmic domain); mediates CEACAM1 phosphorylation resulting in PTPN6 recruitment that dephosphorylates TCR stimulation-induced CD247 and ZAP70. Interacts with CD160. Interacts with CD48. In terms of assembly, (Microbial infection) Interacts with herpes simplex virus 1 UL46; this interaction activates LCK. (Microbial infection) Interacts with HIV-1 Nef through its SH3 domain. In terms of processing, autophosphorylated on Tyr-394, increasing enzymatic activity, this site is dephosphorylated by PTN22. Phosphorylated on Tyr-505 by CSK, decreasing activity. Dephosphorylated by PTPRC/CD45. Dephosphorylation at Tyr-394 by PTPN2 negatively regulates T-cell receptor signaling. Dephosphorylation at Tyr-394 by DUSP22 negatively regulates T-cell receptor signaling. Post-translationally, myristoylation is required prior to palmitoylation. Palmitoylation regulates association with the plasma membrane and could be mediated by ZDHHC2. In terms of processing, 'Lys-63'-linked ubiquitinated at Lys-99 and Lys-276 by UBR2; this modification is required for autophosphorylation at Tyr-394. As to expression, expressed specifically in lymphoid cells.

It is found in the cell membrane. The protein resides in the cytoplasm. The protein localises to the cytosol. The catalysed reaction is L-tyrosyl-[protein] + ATP = O-phospho-L-tyrosyl-[protein] + ADP + H(+). The relative activities of the inhibitory tyrosine-protein kinase CSK and the activating tyrosine-protein phosphatase PTPRC/CD45 determine the level of LCK activity. These interactions allow rapid and efficient activation of LCK in response to TCR stimulation. Functionally, non-receptor tyrosine-protein kinase that plays an essential role in the selection and maturation of developing T-cells in the thymus and in the function of mature T-cells. Plays a key role in T-cell antigen receptor (TCR)-linked signal transduction pathways. Constitutively associated with the cytoplasmic portions of the CD4 and CD8 surface receptors. Association of the TCR with a peptide antigen-bound MHC complex facilitates the interaction of CD4 and CD8 with MHC class II and class I molecules, respectively, thereby recruiting the associated LCK protein to the vicinity of the TCR/CD3 complex. LCK then phosphorylates tyrosine residues within the immunoreceptor tyrosine-based activation motifs (ITAM) of the cytoplasmic tails of the TCR-gamma chains and CD3 subunits, initiating the TCR/CD3 signaling pathway. Once stimulated, the TCR recruits the tyrosine kinase ZAP70, that becomes phosphorylated and activated by LCK. Following this, a large number of signaling molecules are recruited, ultimately leading to lymphokine production. LCK also contributes to signaling by other receptor molecules. Associates directly with the cytoplasmic tail of CD2, which leads to hyperphosphorylation and activation of LCK. Also plays a role in the IL2 receptor-linked signaling pathway that controls the T-cell proliferative response. Binding of IL2 to its receptor results in increased activity of LCK. Is expressed at all stages of thymocyte development and is required for the regulation of maturation events that are governed by both pre-TCR and mature alpha beta TCR. Phosphorylates other substrates including RUNX3, PTK2B/PYK2, the microtubule-associated protein MAPT, RHOH or TYROBP. Interacts with FYB2. In Homo sapiens (Human), this protein is Tyrosine-protein kinase Lck (LCK).